A 417-amino-acid polypeptide reads, in one-letter code: NADH-quinone oxidoreductase subunit D (417 aa).

The protein belongs to the complex I 49 kDa subunit family. In terms of assembly, NDH-1 is composed of 14 different subunits. Subunits NuoB, C, D, E, F, and G constitute the peripheral sector of the complex.

It is found in the cell inner membrane. The enzyme catalyses a quinone + NADH + 5 H(+)(in) = a quinol + NAD(+) + 4 H(+)(out). Functionally, NDH-1 shuttles electrons from NADH, via FMN and iron-sulfur (Fe-S) centers, to quinones in the respiratory chain. The immediate electron acceptor for the enzyme in this species is believed to be ubiquinone. Couples the redox reaction to proton translocation (for every two electrons transferred, four hydrogen ions are translocated across the cytoplasmic membrane), and thus conserves the redox energy in a proton gradient. This chain is NADH-quinone oxidoreductase subunit D, found in Burkholderia mallei (strain NCTC 10247).